The primary structure comprises 488 residues: Inosine-5'-monophosphate dehydrogenase (488 aa).

2 CBS domains span residues 94-150 (IVSE…SKTV) and 154-215 (MTKK…CKDE). NAD(+) is bound by residues D249, 249-251 (DSS), and 299-301 (GIG). 2 residues coordinate K(+): G301 and G303. Residue S304 participates in IMP binding. Position 306 (C306) interacts with K(+). Residue C306 is the Thioimidate intermediate of the active site. Residues 339–341 (DGG), 362–363 (GS), and 386–390 (YRGMG) contribute to the IMP site. R402 acts as the Proton acceptor in catalysis. Residue E416 coordinates IMP. Residues E470, S471, and H472 each coordinate K(+).

It belongs to the IMPDH/GMPR family. Homotetramer. Requires K(+) as cofactor.

The enzyme catalyses IMP + NAD(+) + H2O = XMP + NADH + H(+). The protein operates within purine metabolism; XMP biosynthesis via de novo pathway; XMP from IMP: step 1/1. Its activity is regulated as follows. Mycophenolic acid (MPA) is a non-competitive inhibitor that prevents formation of the closed enzyme conformation by binding to the same site as the amobile flap. In contrast, mizoribine monophosphate (MZP) is a competitive inhibitor that induces the closed conformation. MPA is a potent inhibitor of mammalian IMPDHs but a poor inhibitor of the bacterial enzymes. MZP is a more potent inhibitor of bacterial IMPDH. Catalyzes the conversion of inosine 5'-phosphate (IMP) to xanthosine 5'-phosphate (XMP), the first committed and rate-limiting step in the de novo synthesis of guanine nucleotides, and therefore plays an important role in the regulation of cell growth. The polypeptide is Inosine-5'-monophosphate dehydrogenase (Haemophilus influenzae (strain ATCC 51907 / DSM 11121 / KW20 / Rd)).